The primary structure comprises 1125 residues: Speract receptor (1125 aa).

A signal peptide spans M1–A21. Over R22 to Y510 the chain is Extracellular. 2 N-linked (GlcNAc...) asparagine glycosylation sites follow: N185 and N409. Residues L511–Y531 form a helical membrane-spanning segment. At R532–V1125 the chain is on the cytoplasmic side. Residues M571 to L839 form the Protein kinase domain. One can recognise a Guanylate cyclase domain in the interval S914–E1044.

It belongs to the adenylyl cyclase class-4/guanylyl cyclase family.

The protein resides in the membrane. It carries out the reaction GTP = 3',5'-cyclic GMP + diphosphate. Its function is as follows. Implicated as a cell-surface receptor on spermatozoa for 'speract' a chemotactic peptide, and on various other cells as a receptor for atrial natriuretic peptide. This chain is Speract receptor, found in Strongylocentrotus purpuratus (Purple sea urchin).